The following is a 184-amino-acid chain: Large ribosomal subunit protein uL5 (184 aa).

It belongs to the universal ribosomal protein uL5 family. As to quaternary structure, part of the 50S ribosomal subunit; part of the 5S rRNA/L5/L18/L25 subcomplex. Contacts the 5S rRNA and the P site tRNA. Forms a bridge to the 30S subunit in the 70S ribosome.

This is one of the proteins that bind and probably mediate the attachment of the 5S RNA into the large ribosomal subunit, where it forms part of the central protuberance. In the 70S ribosome it contacts protein S13 of the 30S subunit (bridge B1b), connecting the 2 subunits; this bridge is implicated in subunit movement. Contacts the P site tRNA; the 5S rRNA and some of its associated proteins might help stabilize positioning of ribosome-bound tRNAs. This chain is Large ribosomal subunit protein uL5, found in Ureaplasma urealyticum serovar 10 (strain ATCC 33699 / Western).